A 406-amino-acid chain; its full sequence is Renin (406 aa).

A signal peptide spans 1-23; the sequence is MDGWRRMPRWGLLLLLWGSCTFG. A propeptide spans 24-66 (activation peptide); sequence LPTDTTTFKRIFLKRMPSIRESLKERGVDMARLGPEWSQPMKR. N-linked (GlcNAc...) asparagine glycosylation is present at asparagine 71. A Peptidase A1 domain is found at 86 to 403; it reads YYGEIGIGTP…DRRNNRIGFA (318 aa). Aspartate 104 is a catalytic residue. Cysteine 117 and cysteine 124 are disulfide-bonded. A glycan (N-linked (GlcNAc...) asparagine) is linked at asparagine 141. Cysteine 283 and cysteine 287 are oxidised to a cystine. The active site involves aspartate 292. Residues cysteine 325 and cysteine 362 are joined by a disulfide bond.

The protein belongs to the peptidase A1 family. Interacts with ATP6AP2.

It is found in the secreted. It localises to the membrane. It catalyses the reaction Cleavage of Leu-|-Xaa bond in angiotensinogen to generate angiotensin I.. Interaction with ATP6AP2 results in a 5-fold increased efficiency in angiotensinogen processing. In terms of biological role, renin is a highly specific endopeptidase, whose only known function is to generate angiotensin I from angiotensinogen in the plasma, initiating a cascade of reactions that produce an elevation of blood pressure and increased sodium retention by the kidney. This chain is Renin (REN), found in Homo sapiens (Human).